The primary structure comprises 332 residues: RNA polymerase principal sigma factor HrdD (332 aa).

A disordered region spans residues 1 to 25 (MATRAVARRQSATGETADSASSVRA). Polar residues predominate over residues 10 to 22 (QSATGETADSASS). The short motif at 124-137 (DLIQEGNAGLVRAV) is the Polymerase core binding element. The segment at residues 294–313 (LTEVGKEHGLTRERIRQIEK) is a DNA-binding region (H-T-H motif).

It belongs to the sigma-70 factor family.

Sigma factors are initiation factors that promote the attachment of RNA polymerase to specific initiation sites and are then released. The polypeptide is RNA polymerase principal sigma factor HrdD (hrdD) (Streptomyces viridifaciens).